Consider the following 101-residue polypeptide: Large ribosomal subunit protein uL23c (101 aa).

It belongs to the universal ribosomal protein uL23 family. Part of the 50S ribosomal subunit.

The protein resides in the plastid. Its subcellular location is the chloroplast. In terms of biological role, binds to 23S rRNA. This Cyanidium caldarium (Red alga) protein is Large ribosomal subunit protein uL23c (rpl23).